A 507-amino-acid polypeptide reads, in one-letter code: F-box only protein 31 (507 aa).

A disordered region spans residues 19-42 (RQQRRGPAETAAADSEADTDPEEE). Ser-33 carries the phosphoserine modification. A compositionally biased stretch (acidic residues) spans 33-42 (SEADTDPEEE). Residue Thr-37 is modified to Phosphothreonine. Positions 50–55 (RCSLLE) match the D box motif. The F-box domain occupies 50 to 96 (RCSLLELPPELLVEIFASLPGTDLPSLAQVCSRFRRILHTDTIWRRR). Cys-192, His-200, Cys-216, and His-222 together coordinate Zn(2+). Ser-264 bears the Phosphoserine; by ATM mark. The DDL motif signature appears at 283-285 (DDL). The disordered stretch occupies residues 366 to 417 (EQEAGEGAAPPREPSAKAADGPPAKDGKEPGGGAEAAEQSASSGQGQPFVLP). Low complexity predominate over residues 400 to 412 (EAAEQSASSGQGQ). Ser-448 carries the phosphoserine modification.

The protein belongs to the FBXO31 family. In terms of assembly, part of a SCF (SKP1-cullin-F-box) protein ligase complex SCF(FBXO31) composed of CUL1, SKP1, RBX1 and FBXO31. Interacts (when phosphorylated at Ser-33) with CDC20, promoting ubiquitination by the APC/C complex. Post-translationally, phosphorylation at Ser-264 by ATM following gamma-irradiation results in its stabilization. Phosphorylation at Ser-448 in absence of stress promotes its ubiquitination and degradation by the SCF(FBXO46) complex. Phosphorylation at Ser-33 by AKT1 promotes association with CDC20 and ubiquitination by the APC/C complex. In terms of processing, ubiquitinated by the SCF(FBXO46) complex in absence of stress, promoting its degradation. Ubiquitinated by the APC/C complex following phosphorylation at Ser-33, leading to its degradation by the proteasome.

It localises to the cytoplasm. It is found in the cytoskeleton. The protein resides in the microtubule organizing center. The protein localises to the centrosome. It functions in the pathway protein modification; protein ubiquitination. In terms of biological role, substrate-recognition component of the SCF(FBXO31) protein ligase complex, which specifically mediates the ubiquitination of proteins amidated at their C-terminus in response to oxidative stress, leading to their degradation by the proteasome. FBXO31 specifically recognizes and binds C-terminal peptides bearing an amide: C-terminal amidation in response to oxidative stress takes place following protein fragmentation. The SCF(FBXO31) also plays a role in G1 arrest following DNA damage by mediating ubiquitination of phosphorylated cyclin-D1 (CCND1), promoting its degradation by the proteasome, resulting in G1 arrest. The SCF(FBXO31) complex is however not a major regulator of CCND1 stability during the G1/S transition. In response to genotoxic stress, the SCF(FBXO31) complex directs ubiquitination and degradation of phosphorylated MDM2, thereby promoting p53/TP53-mediated DNA damage response. SCF(FBXO31) complex is required for genomic integrity by catalyzing ubiquitination and degradation of cyclin-A (CCNA1 and/or CCNA2) during the G1 phase. In response to genotoxic stress, the SCF(FBXO31) complex directs ubiquitination and degradation of phosphorylated FBXO46 and MAP2K6. SCF(FBXO31) complex promotes ubiquitination and degradation of CDT1 during the G2 phase to prevent re-replication. The SCF(FBXO31) complex also mediates ubiquitination and degradation of DUSP6, OGT and PARD6A. The chain is F-box only protein 31 from Mus musculus (Mouse).